The primary structure comprises 272 residues: Aquaporin-1 (272 aa).

Residues 1-11 lie on the Cytoplasmic side of the membrane; that stretch reads MASEFKKKLFW. A helical transmembrane segment spans residues 12 to 29; sequence RAVVAEFLAMILFIFISI. The Extracellular segment spans residues 30–48; that stretch reads GSALGFHYPIKSNQTTGAV. The N-linked (GlcNAc...) asparagine glycan is linked to asparagine 42. Residues 49-67 form a helical membrane-spanning segment; sequence QDNVKVSLAFGLSIATLAQ. The Cytoplasmic portion of the chain corresponds to 68-70; the sequence is SVG. The stretch at 71–84 is an intramembrane region; the sequence is HISGAHLNPAVTLG. An NPA 1 motif is present at residues 78–80; that stretch reads NPA. Topologically, residues 85 to 92 are cytoplasmic; the sequence is LLLSCQIS. The helical transmembrane segment at 93-111 threads the bilayer; it reads ILRAIMYIIAQCVGAIVAT. The Extracellular portion of the chain corresponds to 112–135; it reads VILSGITSSLPDNSLGLNALAPGV. A helical transmembrane segment spans residues 136–155; the sequence is NSGQGLGIEIIGTLQLVLCV. At 156-166 the chain is on the cytoplasmic side; sequence LATTDRRRRRD. The helical transmembrane segment at 167–184 threads the bilayer; it reads LGDSGPLAIGFSVALGHL. The Extracellular portion of the chain corresponds to 185–189; that stretch reads LAIDY. Residues 190–202 lie within the membrane without spanning it; it reads TGCGINPARSFGS. The NPA 2 motif lies at 195–197; sequence NPA. Residues 203 to 209 are Extracellular-facing; that stretch reads SVITHNF. Residues 210 to 227 traverse the membrane as a helical segment; it reads QDHWIFWVGPFIGAALAV. The Cytoplasmic portion of the chain corresponds to 228 to 272; it reads LIYDFILAPRSSDLTDRVKVWTSGQVEEYDLDADDINSRVEMKPK. Serine 250 carries the post-translational modification Phosphoserine. Tyrosine 256 bears the Phosphotyrosine mark. Serine 265 carries the post-translational modification Phosphoserine.

It belongs to the MIP/aquaporin (TC 1.A.8) family. As to quaternary structure, homotetramer; each monomer provides an independent water pore. Component of the ankyrin-1 complex in the erythrocyte, composed of ANK1, RHCE, RHAG, SLC4A1, EPB42, GYPA, GYPB and AQP1. Interacts with EPHB2; involved in endolymph production in the inner ear. Identified in a complex with STOM. Interacts (via the N-terminal) with ANK1 (via ANK 1-5 repeats). Interacts (via the C-terminal) with EPB42. Detected in fetal kidney (at protein level). Detected in fetal kidney.

Its subcellular location is the cell membrane. The enzyme catalyses H2O(in) = H2O(out). The catalysed reaction is nitric oxide(out) = nitric oxide(in). It carries out the reaction CO2(out) = CO2(in). It catalyses the reaction glycerol(in) = glycerol(out). The enzyme catalyses H2O2(out) = H2O2(in). The catalysed reaction is K(+)(in) = K(+)(out). It carries out the reaction Na(+)(in) = Na(+)(out). Forms a water channel that facilitates the transport of water across cell membranes, playing a crucial role in water homeostasis in various tissues. Could also be permeable to small solutes including hydrogen peroxide, glycerol and gases such as amonnia (NH3), nitric oxide (NO) and carbon dioxide (CO2). Recruited to the ankyrin-1 complex, a multiprotein complex of the erythrocyte membrane, it could be part of a CO2 metabolon, linking facilitated diffusion of CO2 across the membrane, anion exchange of Cl(-)/HCO3(-) and interconversion of dissolved CO2 and carbonic acid in the cytosol. In vitro, it shows non-selective gated cation channel activity and may be permeable to cations like K(+) and Na(+) in vivo. The polypeptide is Aquaporin-1 (Ovis aries (Sheep)).